Reading from the N-terminus, the 226-residue chain is ATP synthase F(0) complex subunit a (226 aa).

A run of 6 helical transmembrane segments spans residues 13-33 (VILGIPLIAIAMLDPFTLISW), 69-89 (WALLLTSLMLLLMSLNLLGLL), 97-117 (TQLSLNMGLAVPLWLATVIMA), 138-158 (IPVLIIIETISLFIRPLALGV), 179-199 (FVLLSIMPTVAILTSIVLFLL), and 201-221 (LLEIAVAMIQAYVFVLLLSLY).

Belongs to the ATPase A chain family. As to quaternary structure, component of the ATP synthase complex composed at least of ATP5F1A/subunit alpha, ATP5F1B/subunit beta, ATP5MC1/subunit c (homooctomer), MT-ATP6/subunit a, MT-ATP8/subunit 8, ATP5ME/subunit e, ATP5MF/subunit f, ATP5MG/subunit g, ATP5MK/subunit k, ATP5MJ/subunit j, ATP5F1C/subunit gamma, ATP5F1D/subunit delta, ATP5F1E/subunit epsilon, ATP5PF/subunit F6, ATP5PB/subunit b, ATP5PD/subunit d, ATP5PO/subunit OSCP. ATP synthase complex consists of a soluble F(1) head domain (subunits alpha(3) and beta(3)) - the catalytic core - and a membrane F(0) domain - the membrane proton channel (subunits c, a, 8, e, f, g, k and j). These two domains are linked by a central stalk (subunits gamma, delta, and epsilon) rotating inside the F1 region and a stationary peripheral stalk (subunits F6, b, d, and OSCP). Interacts with DNAJC30; interaction is direct.

The protein resides in the mitochondrion inner membrane. It catalyses the reaction H(+)(in) = H(+)(out). Subunit a, of the mitochondrial membrane ATP synthase complex (F(1)F(0) ATP synthase or Complex V) that produces ATP from ADP in the presence of a proton gradient across the membrane which is generated by electron transport complexes of the respiratory chain. ATP synthase complex consist of a soluble F(1) head domain - the catalytic core - and a membrane F(1) domain - the membrane proton channel. These two domains are linked by a central stalk rotating inside the F(1) region and a stationary peripheral stalk. During catalysis, ATP synthesis in the catalytic domain of F(1) is coupled via a rotary mechanism of the central stalk subunits to proton translocation. With the subunit c (ATP5MC1), forms the proton-conducting channel in the F(0) domain, that contains two crucial half-channels (inlet and outlet) that facilitate proton movement from the mitochondrial intermembrane space (IMS) into the matrix. Protons are taken up via the inlet half-channel and released through the outlet half-channel, following a Grotthuss mechanism. The polypeptide is ATP synthase F(0) complex subunit a (Xenopus laevis (African clawed frog)).